Reading from the N-terminus, the 911-residue chain is Protein transport protein SEC24-1 (911 aa).

The segment covering 108-123 (QPLPQQQQQQQQQQGP) has biased composition (low complexity). The tract at residues 108–130 (QPLPQQQQQQQQQQGPAKPPKPM) is disordered. 4 residues coordinate Zn(2+): Cys226, Cys229, Cys248, and Cys251. The zinc finger-like stretch occupies residues 226 to 251 (CRRCRSYMNPFVHFNQDGRRWKCNIC).

This sequence belongs to the SEC23/SEC24 family. SEC24 subfamily. The COPII coat is composed of at least 5 proteins: the SEC23/24 complex, the SEC13/31 complex, and the protein SAR1. Golgi apparatus membrane; Peripheral membrane protein; Cytoplasmic side.

Its subcellular location is the cytoplasm. It is found in the cytoplasmic vesicle. The protein localises to the COPII-coated vesicle membrane. The protein resides in the endoplasmic reticulum membrane. It localises to the golgi apparatus membrane. Component of the coat protein complex II (COPII) which promotes the formation of transport vesicles from the endoplasmic reticulum (ER). The coat has two main functions, the physical deformation of the endoplasmic reticulum membrane into vesicles and the selection of cargo molecules. The protein is Protein transport protein SEC24-1 (SEC241) of Naumovozyma castellii (Yeast).